We begin with the raw amino-acid sequence, 611 residues long: tRNA uridine 5-carboxymethylaminomethyl modification enzyme MnmG (611 aa).

12 to 17 (GGGHSG) is a binding site for FAD. 271-285 (GPRYCPSIEEKVYRF) serves as a coordination point for NAD(+).

The protein belongs to the MnmG family. Homodimer. Heterotetramer of two MnmE and two MnmG subunits. FAD is required as a cofactor.

It localises to the cytoplasm. Its function is as follows. NAD-binding protein involved in the addition of a carboxymethylaminomethyl (cmnm) group at the wobble position (U34) of certain tRNAs, forming tRNA-cmnm(5)s(2)U34. This Karelsulcia muelleri (strain GWSS) (Sulcia muelleri) protein is tRNA uridine 5-carboxymethylaminomethyl modification enzyme MnmG.